A 278-amino-acid chain; its full sequence is Phosphate import ATP-binding protein PstB (278 aa).

In terms of domain architecture, ABC transporter spans 32 to 273; it reads YETRDLNLWY…PSDKRTEDYI (242 aa). Position 64 to 71 (64 to 71) interacts with ATP; it reads GPSGCGKS.

Belongs to the ABC transporter superfamily. Phosphate importer (TC 3.A.1.7) family. As to quaternary structure, the complex is composed of two ATP-binding proteins (PstB), two transmembrane proteins (PstC and PstA) and a solute-binding protein (PstS).

It is found in the cell membrane. It carries out the reaction phosphate(out) + ATP + H2O = ADP + 2 phosphate(in) + H(+). In terms of biological role, part of the ABC transporter complex PstSACB involved in phosphate import. Responsible for energy coupling to the transport system. The protein is Phosphate import ATP-binding protein PstB of Halalkalibacterium halodurans (strain ATCC BAA-125 / DSM 18197 / FERM 7344 / JCM 9153 / C-125) (Bacillus halodurans).